The chain runs to 283 residues: Thymidylate synthase (283 aa).

Residue arginine 22 participates in dUMP binding. Cysteine 160 functions as the Nucleophile in the catalytic mechanism. Residues 180 to 183 (RSCD), asparagine 191, and 221 to 223 (HIY) contribute to the dUMP site. Aspartate 183 contributes to the (6R)-5,10-methylene-5,6,7,8-tetrahydrofolate binding site. Alanine 282 lines the (6R)-5,10-methylene-5,6,7,8-tetrahydrofolate pocket.

It belongs to the thymidylate synthase family. Bacterial-type ThyA subfamily. In terms of assembly, homodimer.

The protein resides in the cytoplasm. The catalysed reaction is dUMP + (6R)-5,10-methylene-5,6,7,8-tetrahydrofolate = 7,8-dihydrofolate + dTMP. Its pathway is pyrimidine metabolism; dTTP biosynthesis. Functionally, catalyzes the reductive methylation of 2'-deoxyuridine-5'-monophosphate (dUMP) to 2'-deoxythymidine-5'-monophosphate (dTMP) while utilizing 5,10-methylenetetrahydrofolate (mTHF) as the methyl donor and reductant in the reaction, yielding dihydrofolate (DHF) as a by-product. This enzymatic reaction provides an intracellular de novo source of dTMP, an essential precursor for DNA biosynthesis. The protein is Thymidylate synthase of Idiomarina loihiensis (strain ATCC BAA-735 / DSM 15497 / L2-TR).